The chain runs to 135 residues: MSKLNKTILADFEAAQIQRKLPEFNQGDTVVVNVKVKEGNRERVQAYEGVVIGTKNAGLNSSFTVRKISHGFGVERVFQTHSAIIDSVEVKRRGKVRAGKLYYLRGLEGKAARIKEDLAAAAQAKAARQAAAKAE.

The protein belongs to the bacterial ribosomal protein bL19 family.

Functionally, this protein is located at the 30S-50S ribosomal subunit interface and may play a role in the structure and function of the aminoacyl-tRNA binding site. This Xanthomonas axonopodis pv. citri (strain 306) protein is Large ribosomal subunit protein bL19.